A 372-amino-acid chain; its full sequence is Tyrosine--tRNA ligase (372 aa).

L-tyrosine contacts are provided by Tyr37, Tyr169, Gln173, Asp176, and Gln191. Residues 246–250 (KMSKS) carry the 'KMSKS' region motif. Lys249 lines the ATP pocket.

The protein belongs to the class-I aminoacyl-tRNA synthetase family. TyrS type 4 subfamily. As to quaternary structure, homodimer.

The protein resides in the cytoplasm. It catalyses the reaction tRNA(Tyr) + L-tyrosine + ATP = L-tyrosyl-tRNA(Tyr) + AMP + diphosphate + H(+). Catalyzes the attachment of tyrosine to tRNA(Tyr) in a two-step reaction: tyrosine is first activated by ATP to form Tyr-AMP and then transferred to the acceptor end of tRNA(Tyr). The sequence is that of Tyrosine--tRNA ligase from Pyrobaculum arsenaticum (strain DSM 13514 / JCM 11321 / PZ6).